A 635-amino-acid polypeptide reads, in one-letter code: Voltage-gated potassium channel KCNC4 (635 aa).

The tract at residues 1–24 (MISSVCVSSYRGRKSGNKPPSKTC) is disordered. The tract at residues 1-28 (MISSVCVSSYRGRKSGNKPPSKTCLKEE) is inactivation gate. The Cytoplasmic segment spans residues 1 to 226 (MISSVCVSSY…EDPYSSRAAR (226 aa)). Ser-8, Ser-9, Ser-15, and Ser-21 each carry phosphoserine. Residues His-116, Cys-122, Cys-143, and Cys-144 each contribute to the Zn(2+) site. Positions 160 to 180 (IFESPDGGGSGAGPSDEAGDD) are disordered. Residues 227–247 (VVAFASLFFILVSITTFCLET) traverse the membrane as a helical segment. N-linked (GlcNAc...) asparagine glycosylation is found at Asn-256 and Asn-265. Residues 278 to 298 (EPILTYIEGVCVLWFTLEFLV) form a helical membrane-spanning segment. Residues 299–312 (RIVCCPDTLDFVKN) lie on the Cytoplasmic side of the membrane. A helical transmembrane segment spans residues 313-333 (LLNIIDFVAILPFYLEVGLSG). Residues 345-364 (FLRVVRFVRILRIFKLTRHF) form a helical; Voltage-sensor membrane-spanning segment. The Cytoplasmic segment spans residues 365–380 (VGLRVLGHTLRASTNE). A helical membrane pass occupies residues 381-401 (FLLLIIFLALGVLIFATMIYY). Residues Thr-436, Leu-437, Gly-438, and Tyr-439 each coordinate K(+). The Selectivity filter signature appears at 436-441 (TLGYGD). A helical transmembrane segment spans residues 452–472 (VGALCALAGVLTIAMPVPVIV). Over 473–635 (NNFGMYYSLA…PTAGTLFLPH (163 aa)) the chain is Cytoplasmic. The segment at 490 to 580 (KKRKKHVPRP…RRALRRSTTR (91 aa)) is disordered. Positions 527–542 (AREEGMIERKRADSKQ) are enriched in basic and acidic residues.

The protein belongs to the potassium channel family. C (Shaw) (TC 1.A.1.2) subfamily. Kv3.4/KCNC4 sub-subfamily. As to quaternary structure, homotetramer. Heterotetramer of potassium channel proteins. In terms of processing, phosphorylation of serine residues in the inactivation gate inhibits rapid channel closure.

Its subcellular location is the membrane. The catalysed reaction is K(+)(in) = K(+)(out). Voltage-gated potassium channel that opens in response to the voltage difference across the membrane, forming a potassium-selective channel through which potassium ions pass in accordance with their electrochemical gradient. The channel displays rapid activation and inactivation kinetics. This Homo sapiens (Human) protein is Voltage-gated potassium channel KCNC4.